The sequence spans 279 residues: Movement protein (279 aa).

Belongs to the cucumovirus movement protein family.

The protein localises to the host cell junction. Its subcellular location is the host plasmodesma. In terms of biological role, transports viral genome to neighboring plant cells directly through plasmosdesmata, without any budding. The movement protein allows efficient cell to cell propagation, by bypassing the host cell wall barrier. Acts by forming a tubular structure at the host plasmodesmata, enlarging it enough to allow free passage of virion capsids. The chain is Movement protein from Cucumis sativus (Cucumber).